A 262-amino-acid polypeptide reads, in one-letter code: Small ribosomal subunit protein eS1 (262 aa).

Residues 235 to 253 (HGDGKGSDEPGAKVSRPEA) show a composition bias toward basic and acidic residues. Residues 235 to 262 (HGDGKGSDEPGAKVSRPEAYEPPVQESV) form a disordered region.

The protein belongs to the eukaryotic ribosomal protein eS1 family. As to quaternary structure, component of the small ribosomal subunit. Mature ribosomes consist of a small (40S) and a large (60S) subunit. The 40S subunit contains about 33 different proteins and 1 molecule of RNA (18S). The 60S subunit contains about 49 different proteins and 3 molecules of RNA (28S, 5.8S and 5S).

It localises to the cytoplasm. The polypeptide is Small ribosomal subunit protein eS1 (Triatoma infestans (Assassin bug)).